A 729-amino-acid polypeptide reads, in one-letter code: 1,4-alpha-glucan branching enzyme GlgB (729 aa).

Asp-407 functions as the Nucleophile in the catalytic mechanism. Glu-460 functions as the Proton donor in the catalytic mechanism.

This sequence belongs to the glycosyl hydrolase 13 family. GlgB subfamily. In terms of assembly, monomer.

It carries out the reaction Transfers a segment of a (1-&gt;4)-alpha-D-glucan chain to a primary hydroxy group in a similar glucan chain.. It participates in glycan biosynthesis; glycogen biosynthesis. Its function is as follows. Catalyzes the formation of the alpha-1,6-glucosidic linkages in glycogen by scission of a 1,4-alpha-linked oligosaccharide from growing alpha-1,4-glucan chains and the subsequent attachment of the oligosaccharide to the alpha-1,6 position. This is 1,4-alpha-glucan branching enzyme GlgB from Pseudoalteromonas atlantica (strain T6c / ATCC BAA-1087).